The following is a 380-amino-acid chain: L-lactate dehydrogenase (380 aa).

The region spanning 1–380 is the FMN hydroxy acid dehydrogenase domain; the sequence is MIISSPNDYR…TRDSLVGLPR (380 aa). Y24 is a binding site for substrate. Residues S106 and Q127 each coordinate FMN. Residue Y129 coordinates substrate. Position 155 (T155) interacts with FMN. R164 is a substrate binding site. Position 251 (K251) interacts with FMN. H275 (proton acceptor) is an active-site residue. Residue R278 participates in substrate binding. 306 to 330 provides a ligand contact to FMN; sequence DSGIRTGLDVVRMLALGAKGVLLGR.

It belongs to the FMN-dependent alpha-hydroxy acid dehydrogenase family. FMN is required as a cofactor.

It is found in the cell inner membrane. It carries out the reaction (S)-lactate + A = pyruvate + AH2. Functionally, catalyzes the conversion of L-lactate to pyruvate. Is coupled to the respiratory chain. This chain is L-lactate dehydrogenase, found in Azorhizobium caulinodans (strain ATCC 43989 / DSM 5975 / JCM 20966 / LMG 6465 / NBRC 14845 / NCIMB 13405 / ORS 571).